We begin with the raw amino-acid sequence, 252 residues long: Indole-3-glycerol phosphate synthase (252 aa).

It belongs to the TrpC family.

The enzyme catalyses 1-(2-carboxyphenylamino)-1-deoxy-D-ribulose 5-phosphate + H(+) = (1S,2R)-1-C-(indol-3-yl)glycerol 3-phosphate + CO2 + H2O. Its pathway is amino-acid biosynthesis; L-tryptophan biosynthesis; L-tryptophan from chorismate: step 4/5. The sequence is that of Indole-3-glycerol phosphate synthase from Listeria welshimeri serovar 6b (strain ATCC 35897 / DSM 20650 / CCUG 15529 / CIP 8149 / NCTC 11857 / SLCC 5334 / V8).